A 193-amino-acid polypeptide reads, in one-letter code: Penicillin-binding protein activator LpoB (193 aa).

The signal sequence occupies residues 1–16 (MKKMLFVVAAVFLLAG). Cys-17 carries the N-palmitoyl cysteine lipid modification. Residue Cys-17 is the site of S-diacylglycerol cysteine attachment. The tract at residues 23–50 (QQPPAPVEPVTPTEPTEPPKPIEPPIEV) is disordered. Positions 37–46 (PTEPPKPIEP) are enriched in pro residues.

The protein belongs to the LpoB family. Interacts with PBP1b.

The protein resides in the cell outer membrane. Functionally, regulator of peptidoglycan synthesis that is essential for the function of penicillin-binding protein 1B (PBP1b). The sequence is that of Penicillin-binding protein activator LpoB from Proteus mirabilis (strain HI4320).